A 1102-amino-acid chain; its full sequence is Trafficking protein particle complex II-specific subunit 130 (1102 aa).

Belongs to the TMEM1 family. Part of the multisubunit TRAPP (transport protein particle) II complex composed of BET3, BET5, TRS20, TRS23, TRS31, TRS33, TRS65, TRS120 and TRS130. Interacts with YPT31 and YPT32.

Its subcellular location is the golgi apparatus. Its function is as follows. Specific subunit of the TRAPP II complex, a highly conserved vesicle tethering complex that functions in the late Golgi as a guanine nucleotide exchange factor (GEF) for the Golgi YPT1 GTPase. TRS130 plays a role in the YPT GEF activity of TRAPP II in concert with the two other TRAPP II-specific subunits TRS65 and TRS120. Required for both the cytoplasm-to-vacuole targeting (Cvt) pathway and starvation-induced autophagy through its role in ATG8 and ATG9 trafficking. The protein is Trafficking protein particle complex II-specific subunit 130 (TRS130) of Saccharomyces cerevisiae (strain ATCC 204508 / S288c) (Baker's yeast).